A 513-amino-acid polypeptide reads, in one-letter code: V-type proton ATPase subunit B, kidney isoform (513 aa).

Position 394 (Arg394) interacts with ATP. The PDZ-binding signature appears at 510–513 (DTAL).

This sequence belongs to the ATPase alpha/beta chains family. V-ATPase is a heteromultimeric enzyme made up of two complexes: the ATP-hydrolytic V1 complex and the proton translocation V0 complex. The V1 complex consists of three catalytic AB heterodimers that form a heterohexamer, three peripheral stalks each consisting of EG heterodimers, one central rotor including subunits D and F, and the regulatory subunits C and H. The proton translocation complex V0 consists of the proton transport subunit a, a ring of proteolipid subunits c9c'', rotary subunit d, subunits e and f, and the accessory subunits ATP6AP1/Ac45 and ATP6AP2/PRR. Forms a complex with NHERF1 and SCL4A7. As to expression, kidney cortex and medulla.

Its subcellular location is the apical cell membrane. It localises to the basolateral cell membrane. Its function is as follows. Non-catalytic subunit of the V1 complex of vacuolar(H+)-ATPase (V-ATPase), a multisubunit enzyme composed of a peripheral complex (V1) that hydrolyzes ATP and a membrane integral complex (V0) that translocates protons. V-ATPase is responsible for acidifying and maintaining the pH of intracellular compartments and in some cell types, is targeted to the plasma membrane, where it is responsible for acidifying the extracellular environment. Essential for the proper assembly and activity of V-ATPase. In renal intercalated cells, mediates secretion of protons (H+) into the urine thereby ensuring correct urinary acidification. Required for optimal olfactory function by mediating the acidification of the nasal olfactory epithelium. The polypeptide is V-type proton ATPase subunit B, kidney isoform (ATP6V1B1) (Bos taurus (Bovine)).